The chain runs to 324 residues: Homeobox protein engrailed-2 (324 aa).

Disordered regions lie at residues 1-59 (MEEK…HQHP), 89-174 (GGAR…VLKA), and 215-240 (DRPSSGPRSRKPKKKNPNKEDKRPRT). Gly residues predominate over residues 89-110 (GGARGGEGGAGTTEGGGGGAGG). The segment at residues 235–294 (DKRPRTAFTAEQLQRLKAEFQTNRYLTEQRRQSLAQELSLNESQIKIWFQNKRAKIKKAT) is a DNA-binding region (homeobox).

The protein belongs to the engrailed homeobox family. Cerebellar granule cells.

The protein resides in the nucleus. This Mus musculus (Mouse) protein is Homeobox protein engrailed-2 (En2).